The sequence spans 49 residues: MHGGIQRISLRGSMLMPPQSNWQDNRFSSVAAQVDVPRAHIRGHARFSI.

This is an uncharacterized protein from Sinorhizobium fredii (strain NBRC 101917 / NGR234).